The chain runs to 707 residues: Terpene cyclase/mutase atnI (707 aa).

Positions 1–20 are enriched in polar residues; sequence MGQHIASSESSTNGHVSLET. A disordered region spans residues 1-22; sequence MGQHIASSESSTNGHVSLETNG. PFTB repeat units lie at residues 130 to 173, 494 to 535, 571 to 608, and 620 to 661; these read AVEI…RLLG, LRDA…VGKT, TAQGLGFIKQSQKPDGGWYGAWGVCFTYAGMFALETLA, and SRRG…VQTA.

It belongs to the terpene cyclase/mutase family.

Its pathway is secondary metabolite biosynthesis; terpenoid biosynthesis. In terms of biological role, terpene cyclase/mutase; part of the gene cluster that mediates the biosynthesis of the meroterpenoids arthripenoids. The pathway begins with the HR-PKS atnH that catalyzes two chain-extension steps to form a reduced triketide, which then primes the SAT domain in the NR-PKS atnG to initiate three more cycles of extension to give a linear hexaketide corresponding to the polyketide part of arthripenoids. The FAD-dependent monooxygenase atnJ then performs an oxidative decarboxylation at C11 of the atnH/atnG product, via an electrophilic aromatic hydroxylation with concomitant ipso-decarboxylation. The membrane-bound polyprenyl transferase atnF then introduces a farnesyl group before the FAD-dependent monooxygenase atnK functions as the first epoxidase on terminal C12'-C13' olefin, followed by a second epoxidation on C7'-C8' catalyzed by atnA. The terpene cyclase/mutase atnI then initiates the sequential tricyclic ring formation through protonation of the terminal epoxide and catalyzes the regioselective and stereoselective 6/6/6-tricyclic ring formation. The cytochrome P450 monooxygenase atnM is responsible for hydroxylating both C1' and C10'. The next steps may involve ketoreduction and acetyl transfer by the ketoreductase atnB and the acetyltransferase atnC, and lead to the production of arthripenoid B, the final biosynthetic product of the atn cluster. The hydroquinone moiety in arthripenoid B is prone to undergo spontaneous oxidation to afford a benzoquinone compound, a key intermediate for generating structure diversity. For instance, addition of a cysteine followed by ring contraction gives arthripenoid A, tautomerization gives the main product arthripenoid C, addition of a molecular of water or amine affords arthripenoid D or E, respectively, and loss of one water forms arthripenoid F. The polypeptide is Terpene cyclase/mutase atnI (Arthrinium sp).